The chain runs to 343 residues: Ketol-acid reductoisomerase (NADP(+)) (343 aa).

Positions Thr7 to Thr186 constitute a KARI N-terminal Rossmann domain. NADP(+) is bound by residues Tyr30 to Gln33, Arg53, Ser56, Ser58, and Asp88 to Gln91. Residue His112 is part of the active site. Gly138 lines the NADP(+) pocket. A KARI C-terminal knotted domain is found at Ser187 to Gly329. Mg(2+)-binding residues include Asp195, Glu199, Glu231, and Glu235. Ser256 serves as a coordination point for substrate.

This sequence belongs to the ketol-acid reductoisomerase family. Mg(2+) serves as cofactor.

It catalyses the reaction (2R)-2,3-dihydroxy-3-methylbutanoate + NADP(+) = (2S)-2-acetolactate + NADPH + H(+). The catalysed reaction is (2R,3R)-2,3-dihydroxy-3-methylpentanoate + NADP(+) = (S)-2-ethyl-2-hydroxy-3-oxobutanoate + NADPH + H(+). The protein operates within amino-acid biosynthesis; L-isoleucine biosynthesis; L-isoleucine from 2-oxobutanoate: step 2/4. It participates in amino-acid biosynthesis; L-valine biosynthesis; L-valine from pyruvate: step 2/4. In terms of biological role, involved in the biosynthesis of branched-chain amino acids (BCAA). Catalyzes an alkyl-migration followed by a ketol-acid reduction of (S)-2-acetolactate (S2AL) to yield (R)-2,3-dihydroxy-isovalerate. In the isomerase reaction, S2AL is rearranged via a Mg-dependent methyl migration to produce 3-hydroxy-3-methyl-2-ketobutyrate (HMKB). In the reductase reaction, this 2-ketoacid undergoes a metal-dependent reduction by NADPH to yield (R)-2,3-dihydroxy-isovalerate. This is Ketol-acid reductoisomerase (NADP(+)) from Haloarcula marismortui (strain ATCC 43049 / DSM 3752 / JCM 8966 / VKM B-1809) (Halobacterium marismortui).